Consider the following 60-residue polypeptide: Large ribosomal subunit protein uL30 (60 aa).

Belongs to the universal ribosomal protein uL30 family. Part of the 50S ribosomal subunit.

In Limosilactobacillus reuteri (strain DSM 20016) (Lactobacillus reuteri), this protein is Large ribosomal subunit protein uL30.